A 391-amino-acid polypeptide reads, in one-letter code: Cyclin-B1-2 (391 aa).

Belongs to the cyclin family. Cyclin AB subfamily.

The polypeptide is Cyclin-B1-2 (CYCB1-2) (Oryza sativa subsp. japonica (Rice)).